The sequence spans 616 residues: Leucine aminopeptidase (616 aa).

Residues 128–130 (QCQ) and 282–286 (GGMEN) each bind substrate. H309 provides a ligand contact to Zn(2+). The active-site Proton acceptor is the E310. The Zn(2+) site is built by H313 and E332. The active-site Proton donor is the Y397. A substrate-binding site is contributed by 566–568 (RMK).

Belongs to the peptidase M1 family. Requires Zn(2+) as cofactor.

It localises to the cytoplasm. The enzyme catalyses an epoxide + H2O = an ethanediol. Functionally, aminopeptidase that preferentially cleaves di- and tripeptides. Also has low epoxide hydrolase activity (in vitro). Can hydrolyze the epoxide leukotriene LTA(4) but it forms preferentially 5,6-dihydroxy-7,9,11,14-eicosatetraenoic acid rather than the cytokine leukotriene B(4) as the product compared to the homologous mammalian enzyme (in vitro). The chain is Leucine aminopeptidase (LKHA4) from Arabidopsis thaliana (Mouse-ear cress).